A 132-amino-acid polypeptide reads, in one-letter code: Large ribosomal subunit protein bL20c (132 aa).

This sequence belongs to the bacterial ribosomal protein bL20 family.

The protein resides in the plastid. It is found in the chloroplast. In terms of biological role, binds directly to 23S ribosomal RNA and is necessary for the in vitro assembly process of the 50S ribosomal subunit. It is not involved in the protein synthesizing functions of that subunit. In Coffea arabica (Arabian coffee), this protein is Large ribosomal subunit protein bL20c.